A 166-amino-acid polypeptide reads, in one-letter code: Transcription antitermination protein NusB (166 aa).

Residues 1–18 (MISDESDRFNPRDPKPAD) are compositionally biased toward basic and acidic residues. The disordered stretch occupies residues 1–28 (MISDESDRFNPRDPKPADAGKPSKSAKR).

It belongs to the NusB family.

Functionally, involved in transcription antitermination. Required for transcription of ribosomal RNA (rRNA) genes. Binds specifically to the boxA antiterminator sequence of the ribosomal RNA (rrn) operons. The protein is Transcription antitermination protein NusB of Pseudomonas putida (strain GB-1).